A 150-amino-acid polypeptide reads, in one-letter code: SKP1-like protein 17 (150 aa).

The tract at residues 92-150 (LDAADYLIVIGLKNLIAQAIADYTADKTVNEIRELFNIENDYTPEEEEELRKKNEWAFN) is interaction with the F-box domain of F-box proteins.

It belongs to the SKP1 family. As to quaternary structure, part of a SCF (SKP1-cullin-F-box) protein ligase complex. Interacts with CPR1/CPR30. As to expression, mainly detected in the siliques.

The protein localises to the nucleus. Its pathway is protein modification; protein ubiquitination. Functionally, involved in ubiquitination and subsequent proteasomal degradation of target proteins. Together with CUL1, RBX1 and a F-box protein, it forms a SCF E3 ubiquitin ligase complex. The functional specificity of this complex depends on the type of F-box protein. In the SCF complex, it serves as an adapter that links the F-box protein to CUL1. Probably implicated in incompatibility response after hybridization. This is SKP1-like protein 17 (ASK17) from Arabidopsis thaliana (Mouse-ear cress).